The sequence spans 496 residues: 2,3-bisphosphoglycerate-independent phosphoglycerate mutase (496 aa).

Positions 12 and 62 each coordinate Mn(2+). Residue Ser62 is the Phosphoserine intermediate of the active site. Residues His121, 150-151 (RD), Arg181, Arg187, 252-255 (RNDR), and Lys317 each bind substrate. Positions 384, 388, 425, 426, and 444 each coordinate Mn(2+).

This sequence belongs to the BPG-independent phosphoglycerate mutase family. Monomer. The cofactor is Mn(2+).

The enzyme catalyses (2R)-2-phosphoglycerate = (2R)-3-phosphoglycerate. It participates in carbohydrate degradation; glycolysis; pyruvate from D-glyceraldehyde 3-phosphate: step 3/5. Functionally, catalyzes the interconversion of 2-phosphoglycerate and 3-phosphoglycerate. The chain is 2,3-bisphosphoglycerate-independent phosphoglycerate mutase from Anaplasma phagocytophilum (strain HZ).